The chain runs to 671 residues: DNA ligase (671 aa).

NAD(+)-binding positions include 34 to 38 (DAEYD), 83 to 84 (SL), and E115. K117 acts as the N6-AMP-lysine intermediate in catalysis. NAD(+) contacts are provided by R138, E174, K291, and K315. Zn(2+)-binding residues include C409, C412, C427, and C432. Residues 589 to 671 (RSGGPLTGKS…LQMIDTLEEA (83 aa)) form the BRCT domain.

It belongs to the NAD-dependent DNA ligase family. LigA subfamily. It depends on Mg(2+) as a cofactor. Requires Mn(2+) as cofactor.

The catalysed reaction is NAD(+) + (deoxyribonucleotide)n-3'-hydroxyl + 5'-phospho-(deoxyribonucleotide)m = (deoxyribonucleotide)n+m + AMP + beta-nicotinamide D-nucleotide.. Its function is as follows. DNA ligase that catalyzes the formation of phosphodiester linkages between 5'-phosphoryl and 3'-hydroxyl groups in double-stranded DNA using NAD as a coenzyme and as the energy source for the reaction. It is essential for DNA replication and repair of damaged DNA. In Syntrophotalea carbinolica (strain DSM 2380 / NBRC 103641 / GraBd1) (Pelobacter carbinolicus), this protein is DNA ligase.